A 232-amino-acid chain; its full sequence is Adenosylcobinamide-GDP ribazoletransferase (232 aa).

Transmembrane regions (helical) follow at residues L24–L44, I46–L66, I96–L116, P117–A137, G153–V173, V174–I194, and G210–F230.

The protein belongs to the CobS family. Requires Mg(2+) as cofactor.

The protein resides in the cell membrane. The enzyme catalyses alpha-ribazole + adenosylcob(III)inamide-GDP = adenosylcob(III)alamin + GMP + H(+). It carries out the reaction alpha-ribazole 5'-phosphate + adenosylcob(III)inamide-GDP = adenosylcob(III)alamin 5'-phosphate + GMP + H(+). It functions in the pathway cofactor biosynthesis; adenosylcobalamin biosynthesis; adenosylcobalamin from cob(II)yrinate a,c-diamide: step 7/7. Functionally, joins adenosylcobinamide-GDP and alpha-ribazole to generate adenosylcobalamin (Ado-cobalamin). Also synthesizes adenosylcobalamin 5'-phosphate from adenosylcobinamide-GDP and alpha-ribazole 5'-phosphate. The chain is Adenosylcobinamide-GDP ribazoletransferase from Pyrococcus abyssi (strain GE5 / Orsay).